Here is a 541-residue protein sequence, read N- to C-terminus: Chaperonin GroEL 2 (541 aa).

ATP contacts are provided by residues 29–32 (TLGP), 86–90 (DGTTT), G414, 478–480 (DAA), and D494.

This sequence belongs to the chaperonin (HSP60) family. In terms of assembly, forms a cylinder of 14 subunits composed of two heptameric rings stacked back-to-back. Interacts with the co-chaperonin GroES.

Its subcellular location is the cytoplasm. It catalyses the reaction ATP + H2O + a folded polypeptide = ADP + phosphate + an unfolded polypeptide.. Its function is as follows. Together with its co-chaperonin GroES, plays an essential role in assisting protein folding. The GroEL-GroES system forms a nano-cage that allows encapsulation of the non-native substrate proteins and provides a physical environment optimized to promote and accelerate protein folding. This Frankia casuarinae (strain DSM 45818 / CECT 9043 / HFP020203 / CcI3) protein is Chaperonin GroEL 2.